A 233-amino-acid polypeptide reads, in one-letter code: Phosphonates import ATP-binding protein PhnC 1 (233 aa).

The region spanning 2–227 (LSVSGLTKRY…PAAALDREDI (226 aa)) is the ABC transporter domain. 34-41 (GRSGAGKT) contributes to the ATP binding site.

This sequence belongs to the ABC transporter superfamily. Phosphonates importer (TC 3.A.1.9.1) family. The complex is composed of two ATP-binding proteins (PhnC), two transmembrane proteins (PhnE) and a solute-binding protein (PhnD).

The protein resides in the cell membrane. The enzyme catalyses phosphonate(out) + ATP + H2O = phosphonate(in) + ADP + phosphate + H(+). Part of the ABC transporter complex PhnCDE involved in phosphonates import. Responsible for energy coupling to the transport system. The protein is Phosphonates import ATP-binding protein PhnC 1 of Natronomonas pharaonis (strain ATCC 35678 / DSM 2160 / CIP 103997 / JCM 8858 / NBRC 14720 / NCIMB 2260 / Gabara) (Halobacterium pharaonis).